Reading from the N-terminus, the 185-residue chain is Large ribosomal subunit protein uL5 (185 aa).

The protein belongs to the universal ribosomal protein uL5 family. Part of the 50S ribosomal subunit; part of the 5S rRNA/L5/L18/L25 subcomplex. Contacts the 5S rRNA and the P site tRNA. Forms a bridge to the 30S subunit in the 70S ribosome.

In terms of biological role, this is one of the proteins that bind and probably mediate the attachment of the 5S RNA into the large ribosomal subunit, where it forms part of the central protuberance. In the 70S ribosome it contacts protein S13 of the 30S subunit (bridge B1b), connecting the 2 subunits; this bridge is implicated in subunit movement. Contacts the P site tRNA; the 5S rRNA and some of its associated proteins might help stabilize positioning of ribosome-bound tRNAs. This chain is Large ribosomal subunit protein uL5, found in Magnetococcus marinus (strain ATCC BAA-1437 / JCM 17883 / MC-1).